Here is a 566-residue protein sequence, read N- to C-terminus: Urease subunit alpha 2 (566 aa).

The 439-residue stretch at Gly-128–Phe-566 folds into the Urease domain. His-133, His-135, and Lys-216 together coordinate Ni(2+). Lys-216 is modified (N6-carboxylysine). His-218 contacts substrate. Ni(2+) is bound by residues His-245 and His-271. The active-site Proton donor is His-319. Asp-359 provides a ligand contact to Ni(2+).

It belongs to the metallo-dependent hydrolases superfamily. Urease alpha subunit family. In terms of assembly, may form a heterohexamer of 3 UreC (alpha) and 3 UreAB (gamma/beta) subunits. May also form a heterotrimer of UreA (gamma), UreB (beta) and UreC (alpha) subunits. Three heterotrimers associate to form the active enzyme. Ni cation serves as cofactor. Carboxylation allows a single lysine to coordinate two nickel ions.

Its subcellular location is the cytoplasm. The enzyme catalyses urea + 2 H2O + H(+) = hydrogencarbonate + 2 NH4(+). Its pathway is nitrogen metabolism; urea degradation; CO(2) and NH(3) from urea (urease route): step 1/1. In Pseudomonas syringae pv. syringae (strain B728a), this protein is Urease subunit alpha 2.